The sequence spans 354 residues: tRNA N6-adenosine threonylcarbamoyltransferase (354 aa).

Residues His-111 and His-115 each contribute to the Fe cation site. Substrate contacts are provided by residues 134-138 (LVSGG), Asp-167, Gly-180, and Asn-279. Asp-319 provides a ligand contact to Fe cation.

The protein belongs to the KAE1 / TsaD family. Fe(2+) is required as a cofactor.

Its subcellular location is the cytoplasm. It carries out the reaction L-threonylcarbamoyladenylate + adenosine(37) in tRNA = N(6)-L-threonylcarbamoyladenosine(37) in tRNA + AMP + H(+). In terms of biological role, required for the formation of a threonylcarbamoyl group on adenosine at position 37 (t(6)A37) in tRNAs that read codons beginning with adenine. Is involved in the transfer of the threonylcarbamoyl moiety of threonylcarbamoyl-AMP (TC-AMP) to the N6 group of A37, together with TsaE and TsaB. TsaD likely plays a direct catalytic role in this reaction. The sequence is that of tRNA N6-adenosine threonylcarbamoyltransferase from Neisseria meningitidis serogroup C / serotype 2a (strain ATCC 700532 / DSM 15464 / FAM18).